We begin with the raw amino-acid sequence, 426 residues long: MFGKSIEAYTKACEVIPGGVDSPVRAFKSVGGTPPFIKKGKGAYLYDVDGNKYVDFVQSWGPLIFGHCDKDIEKVVIKTAKKGLSFGAPTKLETKLASEIVEMYDNIDKVRFVSSGTEATMSAIRLARGVTGKNDIVKFEGCYHGHSDSLLVQAGSGLATFGSPSSPGVPSDLTKHTLLCEYNNIKNLEKCFADSSDIACIIIEPIAGNMGLVPASEEFLKACRELCDKHGALLIFDEVMSGFRASLTGASGIVKTKADIITFGKVIGAGMPVGAFAASKEIMSNLSPEGKIYQAGTLSGNPVAMAAGLKSLRKLKANPDIYDELNKKALRLVNGLKKIANKYEIPFQVDTRGSMFGFFFCEKEPKNFKDVGLCDFKRFATFHHEMLKKGFYFACSQYETGFICTKITNKDIDACLKAANEVMKNL.

Residue K265 is modified to N6-(pyridoxal phosphate)lysine.

The protein belongs to the class-III pyridoxal-phosphate-dependent aminotransferase family. HemL subfamily. As to quaternary structure, homodimer. Requires pyridoxal 5'-phosphate as cofactor.

The protein resides in the cytoplasm. It carries out the reaction (S)-4-amino-5-oxopentanoate = 5-aminolevulinate. It functions in the pathway porphyrin-containing compound metabolism; protoporphyrin-IX biosynthesis; 5-aminolevulinate from L-glutamyl-tRNA(Glu): step 2/2. The protein is Glutamate-1-semialdehyde 2,1-aminomutase of Aliarcobacter butzleri (strain RM4018) (Arcobacter butzleri).